Consider the following 158-residue polypeptide: NAD(P)H-quinone oxidoreductase subunit J, chloroplastic (158 aa).

Belongs to the complex I 30 kDa subunit family. NDH is composed of at least 16 different subunits, 5 of which are encoded in the nucleus.

It localises to the plastid. It is found in the chloroplast thylakoid membrane. It carries out the reaction a plastoquinone + NADH + (n+1) H(+)(in) = a plastoquinol + NAD(+) + n H(+)(out). The enzyme catalyses a plastoquinone + NADPH + (n+1) H(+)(in) = a plastoquinol + NADP(+) + n H(+)(out). Its function is as follows. NDH shuttles electrons from NAD(P)H:plastoquinone, via FMN and iron-sulfur (Fe-S) centers, to quinones in the photosynthetic chain and possibly in a chloroplast respiratory chain. The immediate electron acceptor for the enzyme in this species is believed to be plastoquinone. Couples the redox reaction to proton translocation, and thus conserves the redox energy in a proton gradient. This chain is NAD(P)H-quinone oxidoreductase subunit J, chloroplastic, found in Gossypium barbadense (Sea Island cotton).